The following is a 1311-amino-acid chain: Suppressor of presenilin protein 4 (1311 aa).

The span at 1–11 (MSSEPTSSIES) shows a compositional bias: polar residues. Disordered regions lie at residues 1-58 (MSSE…DDLN) and 75-95 (MFEDDEEDTVSRRRTRRSTAH). 2 consecutive C2H2-type zinc fingers follow at residues 112 to 134 (HACHKCPSRYESKSSLANHTKMH) and 141 to 163 (FACELCDFSASTLKSLTHHNNIH). The segment at 226-304 (EFDTTPPPIL…PPPVRKDVEK (79 aa)) is disordered. The span at 280–293 (SPKGSLPSSSASSV) shows a compositional bias: low complexity. C2H2-type zinc fingers lie at residues 327-349 (QRCPHCPFTTSTVTRLNRHSGGH), 355-379 (YICPSENCNFMCRKAGFLQKHYILH), 451-476 (KKCNIGECEFLTQTLTQLIVHKVKTH), and 487-510 (FLCLTCGHRAKSYAALRTHKLIEH). Positions 544–563 (VKEEPKEADGDESGDESFDS) are disordered. Positions 552–561 (DGDESGDESF) are enriched in acidic residues. 6 C2H2-type zinc fingers span residues 585-607 (FCCNMCPYKAPTMNRCQRHYDKH), 613-635 (FKCQYCSWSSRSKEVIVNHEKLH), 709-731 (FQCTDCPYTSKYRGDMRSHKKRH), 737-759 (YRCVQCTYTTNRPVSLKDHLKQH), 794-816 (YCCDKCPYVTLALGCLWRHHRNH), and 823-845 (NICSNCSYSSIDQRKMEEHTIIH). Residues 865 to 1002 (RPVSSLTDLN…ESPEPDESVE (138 aa)) form a disordered region. The span at 874–897 (NSEKMNERKSTKRKMLDKVEKMEV) shows a compositional bias: basic and acidic residues. Positions 898 to 907 (GEDEEDDEES) are enriched in acidic residues. A compositionally biased stretch (basic and acidic residues) spans 908 to 920 (VDKGTDDGDYKQR). A compositionally biased stretch (polar residues) spans 956–979 (NRINYSLLSKNGSGKPTPSTSSAN). 6 consecutive C2H2-type zinc fingers follow at residues 1022–1044 (LKCPDCPYKSSEPDVLEKHRYYH), 1053–1075 (YACSDCTFNTYTPTALLQHLKLH), 1104–1126 (YYCKNCSFKTSIHRNFIEHSAYH), 1162–1184 (KYCKKCTFKCVSQSNFIEHLDRH), 1190–1212 (YKCYSCDYSDNTKSVVDFHQLNH), and 1261–1284 (LKCPSCEYFCHVSSELAFHMSVHH).

As to expression, expressed in neurons.

The protein resides in the nucleus. In terms of biological role, probable transcriptional regulator, which participates in the transcriptional repression of the presenilin protein hop-1. Might play a role in the oxidative stress response. The chain is Suppressor of presenilin protein 4 (spr-4) from Caenorhabditis elegans.